The primary structure comprises 293 residues: Bifunctional protein FolD (293 aa).

NADP(+)-binding positions include 165–167 (GRS), S190, and I231.

This sequence belongs to the tetrahydrofolate dehydrogenase/cyclohydrolase family. In terms of assembly, homodimer.

It catalyses the reaction (6R)-5,10-methylene-5,6,7,8-tetrahydrofolate + NADP(+) = (6R)-5,10-methenyltetrahydrofolate + NADPH. It carries out the reaction (6R)-5,10-methenyltetrahydrofolate + H2O = (6R)-10-formyltetrahydrofolate + H(+). Its pathway is one-carbon metabolism; tetrahydrofolate interconversion. Functionally, catalyzes the oxidation of 5,10-methylenetetrahydrofolate to 5,10-methenyltetrahydrofolate and then the hydrolysis of 5,10-methenyltetrahydrofolate to 10-formyltetrahydrofolate. The polypeptide is Bifunctional protein FolD (Synechococcus sp. (strain CC9311)).